The following is a 386-amino-acid chain: 26S proteasome non-ATPase regulatory subunit 13 homolog A (386 aa).

An N-acetylalanine modification is found at Ala2. One can recognise a PCI domain in the interval 173–347; the sequence is EFSDFYKSAL…GTIYVSWAQP (175 aa).

This sequence belongs to the proteasome subunit S11 family. Component of the 19S regulatory particle (RP/PA700) lid subcomplex of the 26S proteasome. The 26S proteasome is composed of a core protease (CP), known as the 20S proteasome, capped at one or both ends by the 19S regulatory particle (RP/PA700). The RP/PA700 complex is composed of at least 17 different subunits in two subcomplexes, the base and the lid, which form the portions proximal and distal to the 20S proteolytic core, respectively. As to expression, ubiquitous with highest expression in flowers.

Functionally, acts as a regulatory subunit of the 26S proteasome which is involved in the ATP-dependent degradation of ubiquitinated proteins. The chain is 26S proteasome non-ATPase regulatory subunit 13 homolog A (RPN9A) from Arabidopsis thaliana (Mouse-ear cress).